The following is a 272-amino-acid chain: tRNA uridine(34) hydroxylase (272 aa).

Residues 121 to 217 (SRSDVYTIDT…YFKSTGNINN (97 aa)) enclose the Rhodanese domain. Cys-177 functions as the Cysteine persulfide intermediate in the catalytic mechanism.

It belongs to the TrhO family.

It catalyses the reaction uridine(34) in tRNA + AH2 + O2 = 5-hydroxyuridine(34) in tRNA + A + H2O. In terms of biological role, catalyzes oxygen-dependent 5-hydroxyuridine (ho5U) modification at position 34 in tRNAs. This is tRNA uridine(34) hydroxylase from Ehrlichia ruminantium (strain Welgevonden).